The chain runs to 109 residues: Spermidine export protein MdtI (109 aa).

Helical transmembrane passes span 6-26 (WVHG…NVLL), 36-56 (CYGI…SQAV), 64-84 (AYAL…WVLF), and 88-108 (LNPK…MIKL).

It belongs to the drug/metabolite transporter (DMT) superfamily. Small multidrug resistance (SMR) (TC 2.A.7.1) family. MdtI subfamily. As to quaternary structure, forms a complex with MdtJ.

It is found in the cell inner membrane. Its function is as follows. Catalyzes the excretion of spermidine. This chain is Spermidine export protein MdtI, found in Salmonella arizonae (strain ATCC BAA-731 / CDC346-86 / RSK2980).